Here is an 82-residue protein sequence, read N- to C-terminus: MIKLRLKRFGKKREVSYRIVATNSTSRRDGLPLEELGFYNPRTNETRLDVPAIVRRLQQGAQPTETVRSILRKAQIFEQLKA.

This sequence belongs to the bacterial ribosomal protein bS16 family.

The polypeptide is Small ribosomal subunit protein bS16 (Synechococcus elongatus (strain ATCC 33912 / PCC 7942 / FACHB-805) (Anacystis nidulans R2)).